A 152-amino-acid polypeptide reads, in one-letter code: MSTPARKRLMRDFKRLQQDPPAGISGAPHDNNITLWNAVIFGPDDTPWDGGTFKLTLQFTEDYPNKPPTVRFVSRMFHPNIYADGSICLDILQNQWSPIYDVAAILTSIQSLLCDPNPNSPANSEAARMYSENKREYNRKVREVVEQSWTAD.

Positions Pro-4–Thr-150 constitute a UBC core domain. The active-site Glycyl thioester intermediate is the Cys-88.

Belongs to the ubiquitin-conjugating enzyme family.

It catalyses the reaction S-ubiquitinyl-[E1 ubiquitin-activating enzyme]-L-cysteine + [E2 ubiquitin-conjugating enzyme]-L-cysteine = [E1 ubiquitin-activating enzyme]-L-cysteine + S-ubiquitinyl-[E2 ubiquitin-conjugating enzyme]-L-cysteine.. Its pathway is protein modification; protein ubiquitination. Its function is as follows. Catalyzes the covalent attachment of ubiquitin to other proteins. The protein is Ubiquitin-conjugating enzyme E2 2 (UBC2) of Triticum aestivum (Wheat).